The primary structure comprises 315 residues: DNA-directed RNA polymerase subunit alpha (315 aa).

The interval 1–228 is alpha N-terminal domain (alpha-NTD); the sequence is MLEIEKPKIE…EHFKLFMTLT (228 aa). Positions 245 to 315 are alpha C-terminal domain (alpha-CTD); the sequence is KEKVLEMTIE…LGLGLRKSED (71 aa).

Belongs to the RNA polymerase alpha chain family. As to quaternary structure, homodimer. The RNAP catalytic core consists of 2 alpha, 1 beta, 1 beta' and 1 omega subunit. When a sigma factor is associated with the core the holoenzyme is formed, which can initiate transcription.

The catalysed reaction is RNA(n) + a ribonucleoside 5'-triphosphate = RNA(n+1) + diphosphate. In terms of biological role, DNA-dependent RNA polymerase catalyzes the transcription of DNA into RNA using the four ribonucleoside triphosphates as substrates. The sequence is that of DNA-directed RNA polymerase subunit alpha from Clostridium botulinum (strain Langeland / NCTC 10281 / Type F).